We begin with the raw amino-acid sequence, 199 residues long: MIAVIDVSGNNLTSLTNALIRLGGHFALTHDAQEIQKASHVILPGVGTARSGMTALQQNGLIDVLRTLTQPLLGICLGMQLLLEYSEEDDIPCLGLIPGVAELLKAERNHPVPHMGWNNLHWQKTSSLQQGLNNSDYVYFVHSYALKADDYALARCRYHEEFTAVVKKGNFYGMQFHPEKSADVGMVLLNNFLSLESKC.

Residues 1-199 (MIAVIDVSGN…NNFLSLESKC (199 aa)) enclose the Glutamine amidotransferase type-1 domain. Cys-76 serves as the catalytic Nucleophile. Catalysis depends on residues His-177 and Glu-179.

In terms of assembly, heterodimer of HisH and HisF.

The protein localises to the cytoplasm. The enzyme catalyses 5-[(5-phospho-1-deoxy-D-ribulos-1-ylimino)methylamino]-1-(5-phospho-beta-D-ribosyl)imidazole-4-carboxamide + L-glutamine = D-erythro-1-(imidazol-4-yl)glycerol 3-phosphate + 5-amino-1-(5-phospho-beta-D-ribosyl)imidazole-4-carboxamide + L-glutamate + H(+). The catalysed reaction is L-glutamine + H2O = L-glutamate + NH4(+). It participates in amino-acid biosynthesis; L-histidine biosynthesis; L-histidine from 5-phospho-alpha-D-ribose 1-diphosphate: step 5/9. Functionally, IGPS catalyzes the conversion of PRFAR and glutamine to IGP, AICAR and glutamate. The HisH subunit provides the glutamine amidotransferase activity that produces the ammonia necessary to HisF for the synthesis of IGP and AICAR. The chain is Imidazole glycerol phosphate synthase subunit HisH 2 from Legionella pneumophila (strain Lens).